A 496-amino-acid chain; its full sequence is Nectin 1a (496 aa).

Positions 1–20 (MMFINLLLRLMCVFLIGADG) are cleaved as a signal peptide. Residues 21–349 (QMVQMESSKA…FQDQQQAGVV (329 aa)) lie on the Extracellular side of the membrane. The region spanning 34 to 138 (GSQVELPCQF…GNRENMVNLT (105 aa)) is the Ig-like V-type domain. Cysteine 41 and cysteine 121 are joined by a disulfide. Asparagine 62 and asparagine 136 each carry an N-linked (GlcNAc...) asparagine glycan. Ig-like C2-type domains follow at residues 143–238 (PMIQ…VTLN) and 243–330 (PEVI…VIVT). Disulfide bonds link cysteine 168–cysteine 222 and cysteine 265–cysteine 312. Asparagine 282 carries an N-linked (GlcNAc...) asparagine glycan. A helical transmembrane segment spans residues 350 to 370 (IGGAVVCGTVLLAAVTLLVVF). At 371 to 496 (LYRRRCMFKG…SVISKEEWYV (126 aa)) the chain is on the cytoplasmic side.

Belongs to the nectin family. Cis- and trans-homodimer. Can form trans-heterodimers. In terms of tissue distribution, expressed in the developing eye and nervous system.

It localises to the cell membrane. The protein resides in the cell junction. The protein localises to the adherens junction. Its function is as follows. Cell adhesion molecule that promotes cell-cell contacts and plays important roles in the development of the nervous system. Acts by forming homophilic or heterophilic trans-dimers. This chain is Nectin 1a, found in Danio rerio (Zebrafish).